A 561-amino-acid polypeptide reads, in one-letter code: MLPEQQQQLISLIQAAVASVLPDAQAQVLLERPKVAAHGDVATNIAMQLAKPARRNPRELAQGIVDALMAETAARALVENAEIAGPGFINFRITAAARQAVIQAVAEQGEAYGHAPATGEKVLVEFVSANPTGPLHVGHARQAALGDAICRLYAATGRDVTREFYYNDAGNQIQNLAVSVQARARGIAPDSPDYPADGYKGDYIVDIAQDFIARKTLQAADGAAVTASGDVDNLDDIRVFAVAYLRREQDLDLQAFGLAFDNYYLESSLYTSGRVEQTVQALVAKGHTYEQDGALWLRTTELGTGDDKDRVMRKSEGGYTYFVPDVAYHKAKWERGFRHAVNIQGSDHHGTVARVRAGLQALEEGIPKDYPAYVLHKMVKVMRGGEEVKISKRAGSYVTLRDLIDWVGRDAVRYFLIQRRADTEFVFDIDLALSKSDENPVYYIQYAHARICSMIANAGADDARIAQADTALLTAPTEFALMQRLASFPQIVAQAAQELAPHHIAFWLRDCASDFHAWYNAERVLVDDEPLKLARLRLAATTRQVLANGLALLGVSAPQRM.

A 'HIGH' region motif is present at residues 129–139; it reads ANPTGPLHVGH.

This sequence belongs to the class-I aminoacyl-tRNA synthetase family. In terms of assembly, monomer.

It is found in the cytoplasm. The catalysed reaction is tRNA(Arg) + L-arginine + ATP = L-arginyl-tRNA(Arg) + AMP + diphosphate. This chain is Arginine--tRNA ligase, found in Bordetella petrii (strain ATCC BAA-461 / DSM 12804 / CCUG 43448).